Here is a 532-residue protein sequence, read N- to C-terminus: Cytochrome P450 monooxygenase criE (532 aa).

A helical transmembrane segment spans residues 18–38; the sequence is VSPAALSWAVVAVYIGTFFWL. Cys-441 lines the heme pocket.

It belongs to the cytochrome P450 family. The cofactor is heme.

It is found in the membrane. The catalysed reaction is preechinulin + reduced [NADPH--hemoprotein reductase] + O2 = neoechinulin A + oxidized [NADPH--hemoprotein reductase] + 2 H2O + H(+). It functions in the pathway secondary metabolite biosynthesis. The protein operates within alkaloid biosynthesis. In terms of biological role, cytochrome P450 monooxygenase; part of the gene cluster that mediates the biosynthesis of echinulin family alkaloid. The pathway begins with the biosynthesis of the cyclic dipeptide cyclo-L-Trp-L-Ala (cyclo-TA) by the NRPS criC via condensation of L-alanine and L-tryptophan. The prenyltransferase criA then catalyzes the first prenylation step, a reverse prenylation reaction at C2, to yield preechinulin. Preechinulin is the substrate of the cytochrome P450 monooxygenase criE that catalyzes the formation of the double bond between C10 and C11 to produce neoechulin A. The unique prenyltransferase criF functions as a competitive enzyme with criE for preechinulin metabolization and uses preechinulin for effective regiospecific prenylations. Preechinulin is prenylated by criF at C5 or C7. C7-prenylation leads to accumulation of tardioxopiperazine B without further modification by criF. In contrast, the C5-prenylated tardioxopiperazine A can be prenylated again by criF, predominantly at C7 to form echinulin or less frequently at C4 to give variecolorin L. CriF also accepts neoechilunin A to produce varlecolorin G (prenylation at C5) or isoechinulin A (prenylation at C7). CriF further converts isoechinulin A into dehydroechinulin. Moreover, a yet unidentified enzyme can also convert neoechilunin A into neoechilunin B by introducing a double bond between positions C14 and C17 and thus provides a further substrate to criF for C5 and C7 prenylation. This chain is Cytochrome P450 monooxygenase criE, found in Aspergillus cristatus (Chinese Fuzhuan brick tea-fermentation fungus).